The following is a 124-amino-acid chain: Kalata-B1 (124 aa).

The N-terminal stretch at 1–22 is a signal peptide; the sequence is MAKFTVCLLLCLLLAAFVGAFG. The propeptide occupies 23–88; sequence SELSDSHKTT…QVFLKQLQLK (66 aa). The segment at residues 89–117 is a cross-link (cyclopeptide (Gly-Asn)); sequence GLPVCGETCVGGTCNTPGCTCSWPVCTRN. 3 cysteine pairs are disulfide-bonded: C93/C107, C97/C109, and C102/C114. Positions 118 to 124 are excised as a propeptide; the sequence is GLPSLAA.

Belongs to the cyclotide family. Moebius subfamily. Kalata-B1 is a cyclic peptide which occurs in three forms: with unmodified Trp-111, with Trp-111 oxidized to form oxindolylalanine and with Trp-111 oxidized to form N-formylkynurenine. Oxidation is enhanced by exposure to sunlight. As to expression, leaves and stems. Lower in roots.

Functionally, probably participates in a plant defense mechanism. Has antibiotic activity. Has a diuretic effect. Has a uterotonic effect in humans. Active against the Gram-positive S.aureus with a minimum inhibition concentration of approximately 0.2 microM. Relatively ineffective against Gram-negative bacteria such as E.coli and P.aeruginosa. Inhibitory effect on the growth and development of larvae from H.punctigera. The unmodified form has hemolytic activity, the oxidized form lacks hemolytic activity. If the protein is linearized, hemolytic activity is lost. In Oldenlandia affinis, this protein is Kalata-B1 (OAK1).